The sequence spans 192 residues: GTP-binding protein RHO2 (192 aa).

14–21 (GDGACGKT) provides a ligand contact to GTP. Positions 36–44 (YHPTVFENY) match the Effector region motif. GTP is bound by residues 61 to 65 (DTAGQ) and 119 to 122 (LKKD). C188 carries S-palmitoyl cysteine lipidation. C189 carries the cysteine methyl ester modification. C189 carries the S-geranylgeranyl cysteine lipid modification. The propeptide at 190 to 192 (IIL) is removed in mature form.

The protein belongs to the small GTPase superfamily. Rho family. In terms of assembly, interacts with BEM4.

Its subcellular location is the cell membrane. It carries out the reaction GTP + H2O = GDP + phosphate + H(+). The polypeptide is GTP-binding protein RHO2 (RHO2) (Saccharomyces cerevisiae (strain ATCC 204508 / S288c) (Baker's yeast)).